The following is a 1441-amino-acid chain: Probable cleavage and polyadenylation specificity factor subunit 1 (1441 aa).

This sequence belongs to the CPSF1 family. In terms of assembly, CPSF is a heterotetramer composed of four distinct subunits 160, 100, 70 and 30 kDa.

It is found in the nucleus. Its function is as follows. CPSF plays a key role in pre-mRNA 3'-end formation, recognizing the AAUAAA signal sequence and interacting with poly(A)polymerase and other factors to bring about cleavage and poly(A) addition. This subunit is involved in the RNA recognition step of the polyadenylation reaction. This chain is Probable cleavage and polyadenylation specificity factor subunit 1, found in Oryza sativa subsp. japonica (Rice).